The primary structure comprises 89 residues: Heat shock protein 30A (89 aa).

Basic and acidic residues-rich tracts occupy residues 1–11 (MRNNVERRMQR) and 19–39 (LSKD…RESE). Residues 1-55 (MRNNVERRMQRVNEACRLLSKDTEMRRITDQNRQSRESEGTSPNSGKDGKDHFEL) form a disordered region. The sHSP domain occupies 35 to 89 (SRESEGTSPNSGKDGKDHFELTLNVRDFSPHELTVKTQGRRVIVTGKHERKSDTE).

The protein belongs to the small heat shock protein (HSP20) family.

The polypeptide is Heat shock protein 30A (hsp30a) (Xenopus laevis (African clawed frog)).